We begin with the raw amino-acid sequence, 437 residues long: UDP-N-acetylmuramate--L-alanine ligase (437 aa).

Position 108-114 (108-114 (GAHGKTS)) interacts with ATP.

It belongs to the MurCDEF family.

It localises to the cytoplasm. It catalyses the reaction UDP-N-acetyl-alpha-D-muramate + L-alanine + ATP = UDP-N-acetyl-alpha-D-muramoyl-L-alanine + ADP + phosphate + H(+). It functions in the pathway cell wall biogenesis; peptidoglycan biosynthesis. Cell wall formation. The sequence is that of UDP-N-acetylmuramate--L-alanine ligase from Staphylococcus aureus (strain COL).